The sequence spans 380 residues: Probable protein phosphatase 2C 2 (380 aa).

The PPM-type phosphatase domain maps to 122–376 (GYSVYCKRGK…DDISVMLIQL (255 aa)). Mn(2+)-binding residues include aspartate 158, glycine 159, aspartate 321, and aspartate 367.

The protein belongs to the PP2C family. The cofactor is Mg(2+). Requires Mn(2+) as cofactor.

The enzyme catalyses O-phospho-L-seryl-[protein] + H2O = L-seryl-[protein] + phosphate. The catalysed reaction is O-phospho-L-threonyl-[protein] + H2O = L-threonyl-[protein] + phosphate. In Arabidopsis thaliana (Mouse-ear cress), this protein is Probable protein phosphatase 2C 2.